Consider the following 1183-residue polypeptide: Polyphosphatidylinositol phosphatase INP52 (1183 aa).

Residues 133–153 (PPSISTHSSRSSLRSSSSRSL) show a composition bias toward low complexity. A disordered region spans residues 133–161 (PPSISTHSSRSSLRSSSSRSLNAQEQAPK). Ser-152 carries the phosphoserine modification. Positions 167 to 507 (LRKLLSNGSF…GDQISQIYTG (341 aa)) constitute an SAC domain. Phosphoserine is present on Ser-522. Low complexity predominate over residues 955-968 (SPLLSGPSPQPSVV). A disordered region spans residues 955–1183 (SPLLSGPSPQ…VHPLKPCDPN (229 aa)). 2 positions are modified to phosphoserine: Ser-1005 and Ser-1016. Thr-1032 carries the post-translational modification Phosphothreonine. Polar residues-rich tracts occupy residues 1046–1057 (KPVSLQKSSSEL), 1082–1100 (STAP…VSTT), and 1130–1145 (KLNT…SPSN). The residue at position 1095 (Ser-1095) is a Phosphoserine.

Belongs to the synaptojanin family. It in the central section; belongs to the inositol 1,4,5-trisphosphate 5-phosphatase family. Interacts (via SAC domain) with BSP1; the interaction is direct. Interacts with ABP1.

The protein localises to the cytoplasm. The protein resides in the cytoskeleton. It localises to the actin patch. It carries out the reaction a 1,2-diacyl-sn-glycero-3-phospho-(1D-myo-inositol-4,5-bisphosphate) + H2O = a 1,2-diacyl-sn-glycero-3-phospho-(1D-myo-inositol 4-phosphate) + phosphate. Functionally, dephosphorylates a number of phosphatidylinositols (PIs) like phosphatidylinositol 4,5-bisphosphate (PtdIns(4,5)P2), but also phosphatidylinositol 3-phosphate (PtdIns(3)P), phosphatidylinositol 4-phosphate (PtdIns(4)P), and phosphatidylinositol 3,5-bisphosphate (PtdIns(3,5)P2). Controls the cellular levels and subcellular distribution of phosphatidylinositol 3-phosphate and phosphatidylinositol 4,5-bisphosphate. Specifically functions within the early endocytic pathway and actin organization. The sequence is that of Polyphosphatidylinositol phosphatase INP52 from Saccharomyces cerevisiae (strain ATCC 204508 / S288c) (Baker's yeast).